We begin with the raw amino-acid sequence, 225 residues long: Cytochrome c oxidase subunit 2 (225 aa).

Residues 1 to 25 (MSTWFMFMFQESNSYYADNLISFHN) are Mitochondrial intermembrane-facing. Residues 26 to 47 (MVMMIIIMISTLTVYIILDLFM) traverse the membrane as a helical segment. Residues 48–62 (NKFSNLFLLKNHNIE) are Mitochondrial matrix-facing. A helical transmembrane segment spans residues 63–82 (IIWTIIPIIILLIICFPSLK). The Mitochondrial intermembrane portion of the chain corresponds to 83-225 (ILYLIDEIVN…YFLNWVNKQI (143 aa)). H159, C194, E196, C198, H202, and M205 together coordinate Cu cation. E196 serves as a coordination point for Mg(2+).

This sequence belongs to the cytochrome c oxidase subunit 2 family. In terms of assembly, component of the cytochrome c oxidase (complex IV, CIV), a multisubunit enzyme composed of a catalytic core of 3 subunits and several supernumerary subunits. The complex exists as a monomer or a dimer and forms supercomplexes (SCs) in the inner mitochondrial membrane with ubiquinol-cytochrome c oxidoreductase (cytochrome b-c1 complex, complex III, CIII). Cu cation serves as cofactor.

It is found in the mitochondrion inner membrane. It catalyses the reaction 4 Fe(II)-[cytochrome c] + O2 + 8 H(+)(in) = 4 Fe(III)-[cytochrome c] + 2 H2O + 4 H(+)(out). Component of the cytochrome c oxidase, the last enzyme in the mitochondrial electron transport chain which drives oxidative phosphorylation. The respiratory chain contains 3 multisubunit complexes succinate dehydrogenase (complex II, CII), ubiquinol-cytochrome c oxidoreductase (cytochrome b-c1 complex, complex III, CIII) and cytochrome c oxidase (complex IV, CIV), that cooperate to transfer electrons derived from NADH and succinate to molecular oxygen, creating an electrochemical gradient over the inner membrane that drives transmembrane transport and the ATP synthase. Cytochrome c oxidase is the component of the respiratory chain that catalyzes the reduction of oxygen to water. Electrons originating from reduced cytochrome c in the intermembrane space (IMS) are transferred via the dinuclear copper A center (CU(A)) of subunit 2 and heme A of subunit 1 to the active site in subunit 1, a binuclear center (BNC) formed by heme A3 and copper B (CU(B)). The BNC reduces molecular oxygen to 2 water molecules using 4 electrons from cytochrome c in the IMS and 4 protons from the mitochondrial matrix. This Apis mellifera ligustica (Common honeybee) protein is Cytochrome c oxidase subunit 2 (COII).